Consider the following 264-residue polypeptide: Small ribosomal subunit protein uS2 (264 aa).

The tract at residues 228–264 (VDTSATVDEEEAEVAEETESMESAEDLDADLIEEEAE) is disordered. A compositionally biased stretch (acidic residues) spans 234 to 264 (VDEEEAEVAEETESMESAEDLDADLIEEEAE).

Belongs to the universal ribosomal protein uS2 family.

In Symbiobacterium thermophilum (strain DSM 24528 / JCM 14929 / IAM 14863 / T), this protein is Small ribosomal subunit protein uS2.